Here is a 496-residue protein sequence, read N- to C-terminus: MDRMKKIKRQLSMTLRGGRGIDKTNGVPEQIGLDESGGGGGSDLGEAPTRIAPGELRSVRGPLSSAPEIVHEDMKMGSDGESDQASATSSDEVQSPVRVRMRNHPPRKISTEDINKRLSLPADIRLPEGYLEKLTLNSPIFDKPLSRRLRRVSLSEIGFGKLETYIKLDKLGEGTYATVYKGKSKLTDNLVALKEIRLEHEEGAPCTAIREVSLLKDLKHANIVTLHDIIHTEKSLTLVFEYLDKDLKQYLDDCGNVINMHNVKLFLFQLLRGLAYCHRQKVLHRDLKPQNLLINERGELKLADFGLARAKSIPTKTYSNEVVTLWYRPPDILLGSTDYSTQIDMWGVGCIFYEMATGRPLFPGSTVEEQLHFIFRILGTPTEETWPGILSNEEFRTYNYPKYRAEALLSHAPRLDSDGADLLTKLLQFEGRNRISAEDARKHPFFLSLGERIHKLPDTTSIFALKEVQLQKEANIRSTSMPDSGRPAFRVVDTEF.

The interval Met1–Ser95 is disordered. The residue at position 12 (Ser12) is a Phosphoserine; by BRSK2. Phosphoserine is present on residues Ser36, Ser42, Ser64, Ser65, Ser78, Ser82, and Ser89. Basic and acidic residues predominate over residues Ile69–Ser78. Positions Asp83 to Val93 are enriched in polar residues. The residue at position 95 (Ser95) is a Phosphoserine; by CDK5. A phosphoserine mark is found at Ser110, Ser119, Ser138, Ser146, Ser153, and Ser155. The region spanning Tyr165–Phe446 is the Protein kinase domain. ATP-binding positions include Leu171–Val179 and Lys194. Position 175 is a phosphothreonine (Thr175). Asp286 acts as the Proton acceptor in catalysis. Residue Thr380 is modified to Phosphothreonine. A phosphoserine mark is found at Ser391, Ser478, and Ser480.

It belongs to the protein kinase superfamily. CMGC Ser/Thr protein kinase family. CDC2/CDKX subfamily. Found in a complex containing CABLES1, CDK17 and TDRD7. Interacts with BRSK2. Identified in a complex with NSF, syntaxin-1, synaptotagmin, SYN1, SYP and CDK5R1. Interacts with YWHAH, YWHAQ and YWHAZ. Interacts with CCNY; this interaction increases the CDK16 kinase activity. Interacts with CCNYL1; this interaction mutually increases the stability of CDK16 and CCNYL1 and increases the kinase activity of CDK16. Interacts with NSF. In terms of processing, phosphorylation of CDK16 is essential for the binding of CCNY, but also essential for the regulation of CDK16 kinase activity. Phosphorylation of CDK16 is essential for the binding of CCNYl1, but also essential for the regulation of CDK16 kinase activity. Ser-146 and Ser-153 are the critical sites for the binding of CCNYL1 and for modulating CDK16 kinase activity. Phosphorylation at Ser-153 inhibits kinase activity. Highly expressed in testis and brain, and detected at lower levels in heart, skeletal muscle, adipose tissue, lung, spleen and pancreas (at protein level). Ubiquitous with highest levels in testis and brain, with longer form predominant in all tissues except the testis.

It localises to the cytoplasm. The protein localises to the cytoplasmic vesicle. It is found in the secretory vesicle. The protein resides in the cell membrane. Its subcellular location is the synapse. It localises to the synaptosome. It catalyses the reaction L-seryl-[protein] + ATP = O-phospho-L-seryl-[protein] + ADP + H(+). It carries out the reaction L-threonyl-[protein] + ATP = O-phospho-L-threonyl-[protein] + ADP + H(+). Protein kinase that plays a role in vesicle-mediated transport processes and exocytosis. Can phosphorylate CCNY at 'Ser-336' (in vitro). Plays a role in the regulation of insulin secretion in response to changes in blood glucose levels. Regulates GH1 release by brain neurons. Phosphorylates NSF, and thereby regulates NSF oligomerization. Required for normal spermatogenesis. Regulates neuron differentiation and dendrite development. The chain is Cyclin-dependent kinase 16 (Cdk16) from Mus musculus (Mouse).